The sequence spans 86 residues: Large ribosomal subunit protein eL20 (86 aa).

The protein belongs to the eukaryotic ribosomal protein eL20 family. As to quaternary structure, part of the 50S ribosomal subunit. Binds 23S rRNA.

The sequence is that of Large ribosomal subunit protein eL20 from Saccharolobus islandicus (strain Y.N.15.51 / Yellowstone #2) (Sulfolobus islandicus).